A 602-amino-acid chain; its full sequence is Elongation factor 4 (602 aa).

Residues 2–184 form the tr-type G domain; the sequence is NHIRNFSIIA…AVVAKVPPPK (183 aa). Residues 14–19 and 131–134 contribute to the GTP site; these read DHGKST and NKMD.

Belongs to the TRAFAC class translation factor GTPase superfamily. Classic translation factor GTPase family. LepA subfamily.

It is found in the cell inner membrane. It carries out the reaction GTP + H2O = GDP + phosphate + H(+). Required for accurate and efficient protein synthesis under certain stress conditions. May act as a fidelity factor of the translation reaction, by catalyzing a one-codon backward translocation of tRNAs on improperly translocated ribosomes. Back-translocation proceeds from a post-translocation (POST) complex to a pre-translocation (PRE) complex, thus giving elongation factor G a second chance to translocate the tRNAs correctly. Binds to ribosomes in a GTP-dependent manner. This chain is Elongation factor 4, found in Delftia acidovorans (strain DSM 14801 / SPH-1).